A 313-amino-acid chain; its full sequence is Esterase mpl1 (313 aa).

Catalysis depends on charge relay system residues S174, D259, and H287.

This sequence belongs to the LovG family.

The protein operates within mycotoxin biosynthesis. Functionally, esterase; part of the gene cluster that mediates the biosynthesis of the mycotoxin citrinin, a hepato-nephrotoxic compound to humans due to inhibition of respiration complex III. The pathway begins with the synthesis of a keto-aldehyde intermediate by the citrinin PKS (pksCT) from successive condensations of 4 malonyl-CoA units, presumably with a simple acetyl-CoA starter unit. Release of the keto-aldehyde intermediate is consistent with the presence of the C-terminal reductive release domain. Mp11 collaborates with pksCT by catalyzing the hydrolysis of ACP-bound acyl intermediates to free the ACP from stalled intermediates. Mpl2 then catalyzes the oxidation of the C-12 methyl of the ketone intermediate to an alcohol intermediate which is further oxidized by the oxidoreductase mpl7 to produce a bisaldehyde intermediate. The fourth catalytic step is catalyzed by the mpl4 aldehyde dehydrogenase. The final transformation is the reduction of C-3 by mpl6 to provide the chemically stable citrinin nucleus. This Monascus purpureus (Red mold) protein is Esterase mpl1.